Reading from the N-terminus, the 490-residue chain is Bifunctional protein HldE (490 aa).

A ribokinase region spans residues 1-330; that stretch reads MERKNVESLF…GSLGFQHGEG (330 aa). 205 to 208 contributes to the ATP binding site; the sequence is NRKE. Asp275 is an active-site residue. Residues 356 to 490 are cytidylyltransferase; sequence FTNGCFDLLH…EKILKAYGEE (135 aa).

In the N-terminal section; belongs to the carbohydrate kinase PfkB family. It in the C-terminal section; belongs to the cytidylyltransferase family. As to quaternary structure, homodimer.

It catalyses the reaction D-glycero-beta-D-manno-heptose 7-phosphate + ATP = D-glycero-beta-D-manno-heptose 1,7-bisphosphate + ADP + H(+). The enzyme catalyses D-glycero-beta-D-manno-heptose 1-phosphate + ATP + H(+) = ADP-D-glycero-beta-D-manno-heptose + diphosphate. The protein operates within nucleotide-sugar biosynthesis; ADP-L-glycero-beta-D-manno-heptose biosynthesis; ADP-L-glycero-beta-D-manno-heptose from D-glycero-beta-D-manno-heptose 7-phosphate: step 1/4. It functions in the pathway nucleotide-sugar biosynthesis; ADP-L-glycero-beta-D-manno-heptose biosynthesis; ADP-L-glycero-beta-D-manno-heptose from D-glycero-beta-D-manno-heptose 7-phosphate: step 3/4. Functionally, catalyzes the phosphorylation of D-glycero-D-manno-heptose 7-phosphate at the C-1 position to selectively form D-glycero-beta-D-manno-heptose-1,7-bisphosphate. Its function is as follows. Catalyzes the ADP transfer from ATP to D-glycero-beta-D-manno-heptose 1-phosphate, yielding ADP-D-glycero-beta-D-manno-heptose. The chain is Bifunctional protein HldE from Geobacter sulfurreducens (strain ATCC 51573 / DSM 12127 / PCA).